Consider the following 424-residue polypeptide: G1/S-specific cyclin-E (424 aa).

The tract at residues 1-25 (MSRRSGRLQSRQDNQPLTECISDEN) is disordered. Positions 7 to 17 (RLQSRQDNQPL) are enriched in polar residues. Threonine 411 is modified (phosphothreonine).

This sequence belongs to the cyclin family. Cyclin E subfamily. In terms of assembly, interacts with a member of the CDK2/CDK protein kinases to form a serine/threonine kinase holoenzyme complex. The cyclin subunit imparts substrate specificity to the complex.

Its subcellular location is the nucleus. Functionally, essential for the control of the cell cycle at the G1/S (start) transition. The protein is G1/S-specific cyclin-E (CYCE) of Hemicentrotus pulcherrimus (Sea urchin).